The chain runs to 1344 residues: Myb-binding protein 1A (1344 aa).

The tract at residues 1-24 (MAEMKSPTKAEPATPAEAAQSDRH) is disordered. N-acetylalanine is present on alanine 2. The interaction with MYB stretch occupies residues 2–580 (AEMKSPTKAE…WDQMMSTLKE (579 aa)). Over residues 7–19 (PTKAEPATPAEAA) the composition is skewed to low complexity. 2 positions are modified to N6-acetyllysine: lysine 69 and lysine 156. Short sequence motifs (nuclear export signal) lie at residues 238–256 (SEDN…ANSV) and 261–279 (KLPN…ESRF). 2 disordered regions span residues 710–751 (DEKQ…DKDV) and 1146–1344 (QRPK…VQTP). A compositionally biased stretch (acidic residues) spans 732–747 (SDMDSEDGEESEEEDR). Positions 1148–1159 (PKSEKKNAKDIP) are enriched in basic and acidic residues. Lysine 1149 participates in a covalent cross-link: Glycyl lysine isopeptide (Lys-Gly) (interchain with G-Cter in SUMO2). The interval 1152–1344 (KKNAKDIPSD…RVASRRVQTP (193 aa)) is required for nuclear and nucleolar localization. Residues serine 1160 and serine 1164 each carry the phosphoserine modification. Basic residues predominate over residues 1168-1185 (TKRKKKGFLPETKKRKKL). Residue serine 1187 is modified to Phosphoserine. Positions 1188 to 1202 (EGTTPEKNAASQQDA) are enriched in polar residues. Residue threonine 1191 is modified to Phosphothreonine. Phosphoserine occurs at positions 1219 and 1244. Residues 1249 to 1258 (NPTLSPSTPA) show a composition bias toward polar residues. Position 1251 is a phosphothreonine (threonine 1251). Position 1253 is a phosphoserine (serine 1253). Phosphothreonine is present on residues threonine 1256 and threonine 1277. Phosphoserine is present on residues serine 1280, serine 1303, and serine 1318. Low complexity predominate over residues 1317-1329 (LSLVSRSPSLLQS). Arginine 1322 carries the citrulline modification. Phosphoserine is present on residues serine 1323, serine 1325, and serine 1329.

Belongs to the MYBBP1A family. As to quaternary structure, component of the B-WICH complex, at least composed of SMARCA5/SNF2H, BAZ1B/WSTF, SF3B1, DEK, MYO1C, ERCC6, MYBBP1A and DDX21. Binds to and represses JUN and MYB via the leucine zipper regions present in these proteins. Also binds to and represses PPARGC1A: this interaction is abrogated when PPARGC1A is phosphorylated by MAPK1/ERK. Binds to and stimulates transcription by AHR. Binds to KPNA2. Interacts with CLOCK and CRY1. In terms of processing, citrullinated by PADI4. In terms of tissue distribution, ubiquitously expressed.

Its subcellular location is the nucleus. The protein localises to the nucleolus. It is found in the cytoplasm. In terms of biological role, may activate or repress transcription via interactions with sequence specific DNA-binding proteins. Repression may be mediated at least in part by histone deacetylase activity (HDAC activity). Acts as a corepressor and in concert with CRY1, represses the transcription of the core circadian clock component PER2. Preferentially binds to dimethylated histone H3 'Lys-9' (H3K9me2) on the PER2 promoter. Has a role in rRNA biogenesis together with PWP1. This is Myb-binding protein 1A (Mybbp1a) from Mus musculus (Mouse).